The sequence spans 174 residues: 3-hydroxydecanoyl-[acyl-carrier-protein] dehydratase (174 aa).

His-73 is an active-site residue.

This sequence belongs to the thioester dehydratase family. FabA subfamily. Homodimer.

The protein resides in the cytoplasm. It catalyses the reaction a (3R)-hydroxyacyl-[ACP] = a (2E)-enoyl-[ACP] + H2O. The enzyme catalyses (3R)-hydroxydecanoyl-[ACP] = (2E)-decenoyl-[ACP] + H2O. It carries out the reaction (2E)-decenoyl-[ACP] = (3Z)-decenoyl-[ACP]. It participates in lipid metabolism; fatty acid biosynthesis. In terms of biological role, necessary for the introduction of cis unsaturation into fatty acids. Catalyzes the dehydration of (3R)-3-hydroxydecanoyl-ACP to E-(2)-decenoyl-ACP and then its isomerization to Z-(3)-decenoyl-ACP. Can catalyze the dehydratase reaction for beta-hydroxyacyl-ACPs with saturated chain lengths up to 16:0, being most active on intermediate chain length. The polypeptide is 3-hydroxydecanoyl-[acyl-carrier-protein] dehydratase (Cellvibrio japonicus (strain Ueda107) (Pseudomonas fluorescens subsp. cellulosa)).